Consider the following 57-residue polypeptide: Large ribosomal subunit protein bL32 (57 aa).

This sequence belongs to the bacterial ribosomal protein bL32 family.

In Halothermothrix orenii (strain H 168 / OCM 544 / DSM 9562), this protein is Large ribosomal subunit protein bL32.